A 146-amino-acid polypeptide reads, in one-letter code: Protein SprT-like (146 aa).

In terms of domain architecture, SprT-like spans 4 to 142 (NEYVKQVSLE…GRCKGKLRLL (139 aa)). H64 is a Zn(2+) binding site. E65 is an active-site residue. H68 is a Zn(2+) binding site.

The protein belongs to the SprT family. The cofactor is Zn(2+).

Its subcellular location is the cytoplasm. The sequence is that of Protein SprT-like from Streptococcus gordonii (strain Challis / ATCC 35105 / BCRC 15272 / CH1 / DL1 / V288).